The primary structure comprises 410 residues: Cysteine desulfurase IscS (410 aa).

Pyridoxal 5'-phosphate is bound by residues 80–81 (AT), N160, Q188, and 208–210 (SGH). K211 is subject to N6-(pyridoxal phosphate)lysine. A pyridoxal 5'-phosphate-binding site is contributed by T248. C334 (cysteine persulfide intermediate) is an active-site residue. C334 lines the [2Fe-2S] cluster pocket.

The protein belongs to the class-V pyridoxal-phosphate-dependent aminotransferase family. NifS/IscS subfamily. In terms of assembly, homodimer. Forms a heterotetramer with IscU, interacts with other sulfur acceptors. Pyridoxal 5'-phosphate is required as a cofactor.

The protein localises to the cytoplasm. The enzyme catalyses (sulfur carrier)-H + L-cysteine = (sulfur carrier)-SH + L-alanine. It participates in cofactor biosynthesis; iron-sulfur cluster biosynthesis. In terms of biological role, master enzyme that delivers sulfur to a number of partners involved in Fe-S cluster assembly, tRNA modification or cofactor biosynthesis. Catalyzes the removal of elemental sulfur atoms from cysteine to produce alanine. Functions as a sulfur delivery protein for Fe-S cluster synthesis onto IscU, an Fe-S scaffold assembly protein, as well as other S acceptor proteins. The chain is Cysteine desulfurase IscS from Rickettsia africae (strain ESF-5).